The chain runs to 164 residues: Protein DOWNSTREAM OF FLC (164 aa).

The signal sequence occupies residues 1–23 (MAKSFVPLIAVLCVLVLPLAAMA). Intrachain disulfides connect Cys-36–Cys-107, Cys-39–Cys-148, and Cys-60–Cys-95.

It belongs to the Ole e I family.

It localises to the secreted. Its function is as follows. Part of a three-gene cluster containing FLC, UFC and DFC, which is coordinately regulated in response to vernalization. Not regulated by FLX. This is Protein DOWNSTREAM OF FLC (DFC) from Arabidopsis thaliana (Mouse-ear cress).